Reading from the N-terminus, the 270-residue chain is Formamidopyrimidine-DNA glycosylase (270 aa).

Pro2 acts as the Schiff-base intermediate with DNA in catalysis. The active-site Proton donor is Glu3. Lys58 (proton donor; for beta-elimination activity) is an active-site residue. The DNA site is built by His91, Arg110, and Arg151. The FPG-type zinc finger occupies 236–270 (RVYDREDAPCRRCATPIRRIVQAQRASFYCPTCQR). Catalysis depends on Arg260, which acts as the Proton donor; for delta-elimination activity.

This sequence belongs to the FPG family. Monomer. Requires Zn(2+) as cofactor.

It catalyses the reaction Hydrolysis of DNA containing ring-opened 7-methylguanine residues, releasing 2,6-diamino-4-hydroxy-5-(N-methyl)formamidopyrimidine.. The catalysed reaction is 2'-deoxyribonucleotide-(2'-deoxyribose 5'-phosphate)-2'-deoxyribonucleotide-DNA = a 3'-end 2'-deoxyribonucleotide-(2,3-dehydro-2,3-deoxyribose 5'-phosphate)-DNA + a 5'-end 5'-phospho-2'-deoxyribonucleoside-DNA + H(+). In terms of biological role, involved in base excision repair of DNA damaged by oxidation or by mutagenic agents. Acts as a DNA glycosylase that recognizes and removes damaged bases. Has a preference for oxidized purines, such as 7,8-dihydro-8-oxoguanine (8-oxoG). Has AP (apurinic/apyrimidinic) lyase activity and introduces nicks in the DNA strand. Cleaves the DNA backbone by beta-delta elimination to generate a single-strand break at the site of the removed base with both 3'- and 5'-phosphates. This chain is Formamidopyrimidine-DNA glycosylase, found in Thiobacillus denitrificans (strain ATCC 25259 / T1).